The following is a 474-amino-acid chain: MSYPQGYLYQAPGSLALYSCPAYGASALAAPRSEELARSASGSAFSPYPGSAAFTAQAATGFGSPLQYSADAAAAAAAGFPSYVGSPYDTHTTGMTGAISYHPYGSAAYPYQLNDPAYRKNATRDATATLKAWLNEHRKNPYPTKGEKIMLAIITKMTLTQVSTWFANARRRLKKENKMTWAPRNKSEDEDEDEGDASRSKEESSDKAQDGTETSAEDEGISLHVDSLTDHSCSAESDGEKLPCRAGDALCESGSECKDKFEDLEDEEDEEDECERDLAPPKPVTSSPLTGVEAPLLSPAPEAAPRGGSGGKTPLGSRTSPGAPPPASKPKLWSLAEIATSDLKQPSLGPGCGPPGLPAAAAPASTGAPPGGSPYSASPLLGRHLYYTSPFYGNYTNYGNLNAALQGQGLLRYNTAASSPGETLHAMPKAASDTGKAGSHSLESHYRPPGGGYEPKKDTSEGCAVVGAGVQTYL.

The segment at residues 115–177 is a DNA-binding region (homeobox; TALE-type); it reads DPAYRKNATR…NARRRLKKEN (63 aa). 3 disordered regions span residues 177–220, 262–373, and 420–461; these read NKMT…EDEG, EDLE…PGGS, and PGET…DTSE. A Phosphoserine modification is found at serine 187. The span at 196–210 shows a compositional bias: basic and acidic residues; the sequence is DASRSKEESSDKAQD. The span at 262–275 shows a compositional bias: acidic residues; sequence EDLEDEEDEEDECE. Composition is skewed to low complexity over residues 293–305 and 358–373; these read EAPLLSPAPEAAP and PAAAAPASTGAPPGGS.

The protein belongs to the TALE/IRO homeobox family. As to expression, expressed in specific and overlapping patterns with Irx1 and Irx3 in the developing and adult metanephric kidney. In the adult metanephros, renal expression is found in the loop of Henle in the S3 proximal tubule segment and in the thick ascending limb (TAL) of the distal tubule.

The protein localises to the nucleus. This chain is Iroquois-class homeodomain protein IRX-2 (Irx2), found in Mus musculus (Mouse).